The following is a 312-amino-acid chain: Probable deoxyhypusine synthase (312 aa).

Lysine 285 (nucleophile) is an active-site residue.

It belongs to the deoxyhypusine synthase family. The cofactor is NAD(+).

The enzyme catalyses [eIF5A protein]-L-lysine + spermidine = [eIF5A protein]-deoxyhypusine + propane-1,3-diamine. It functions in the pathway protein modification; eIF5A hypusination. Its function is as follows. Catalyzes the NAD-dependent oxidative cleavage of spermidine and the subsequent transfer of the butylamine moiety of spermidine to the epsilon-amino group of a specific lysine residue of the eIF-5A precursor protein to form the intermediate deoxyhypusine residue. This Saccharolobus solfataricus (strain ATCC 35092 / DSM 1617 / JCM 11322 / P2) (Sulfolobus solfataricus) protein is Probable deoxyhypusine synthase (dys).